Here is a 310-residue protein sequence, read N- to C-terminus: Transcriptional regulator NRG1 (310 aa).

Residues 85-131 are disordered; sequence YYMGPPAQHRLPTPPPYPMSSPTTATAATPLSQQSPHLQPQQTLQQP. Over residues 104-131 the composition is skewed to low complexity; that stretch reads SSPTTATAATPLSQQSPHLQPQQTLQQP. 2 consecutive C2H2-type zinc fingers follow at residues 228 to 250 and 256 to 280; these read HVCK…NRIH and HQCP…YKTH.

The protein localises to the nucleus. Functionally, transcriptional repressor that binds NRG1 response elements (NRE) of target promoters. Involved in regulation of chlamydospore formation, hyphal growth, virulence, and stress response. Plays a key role in regulating true hyphal growth, but does not regulate pseudohyphal growth in the same fashion. Directs transcriptional repression of a subset of filament-specific genes such as HWP1, HYR1, ALS8, HWP1, or ECE1; via the TUP1 pathway. Functions with UME6 in a negative feedback loop to control the level and duration of filament-specific gene expression in response to inducing conditions. Plays a key role in biofilm formation and dispersion. Also plays the role of a negative regulator of virulence in mice models. Required for the expression of the cell wall genes RBR1. The sequence is that of Transcriptional regulator NRG1 (NRG1) from Candida albicans (strain SC5314 / ATCC MYA-2876) (Yeast).